A 160-amino-acid chain; its full sequence is MAKQKKHPTGTIAQNKKARHDYFIEHKFEAGLVLSGWEVKSLRAGKAHLTDSYVLLKDGEAWLFGSHITPLTTASTHVIADPIRTRKLLLNKRELERLEAAVAQKGYTCVALALYWSKHLIKCEIALGKGKKEFDKRDTMRERDSNRELQRAVRNKGKED.

The segment at Lys136–Asp160 is disordered.

The protein belongs to the SmpB family.

It localises to the cytoplasm. In terms of biological role, required for rescue of stalled ribosomes mediated by trans-translation. Binds to transfer-messenger RNA (tmRNA), required for stable association of tmRNA with ribosomes. tmRNA and SmpB together mimic tRNA shape, replacing the anticodon stem-loop with SmpB. tmRNA is encoded by the ssrA gene; the 2 termini fold to resemble tRNA(Ala) and it encodes a 'tag peptide', a short internal open reading frame. During trans-translation Ala-aminoacylated tmRNA acts like a tRNA, entering the A-site of stalled ribosomes, displacing the stalled mRNA. The ribosome then switches to translate the ORF on the tmRNA; the nascent peptide is terminated with the 'tag peptide' encoded by the tmRNA and targeted for degradation. The ribosome is freed to recommence translation, which seems to be the essential function of trans-translation. The chain is SsrA-binding protein from Pseudomonas putida (strain GB-1).